A 416-amino-acid polypeptide reads, in one-letter code: MDKFQIQGNGPLKGEIRISGAKNAALPILCAGLLTADTVTIGNVPDLQDTRTMLKLLRQMGMKAEMVDGVATLQGADINSPEASYDLVKTMRASILVLGPLVARFGEARVSLPGGCGIGARPVDQHIKGLQAMGAEITIEHGFIHARANRLKGARVVTDMITVTGTENLLMAATLAEGETVLENAAREPEVTDLAELLVKMGAKIEGIGTDRLVVQGVDRLHGAEHKVVADRIEAGTFLCAAAATLGDIVLRGIPPLILDAVLIKLREAGATVETGDDWIRLAMPQRAQAVSFRTSEYPAFPTDMQAQFMALNAVAEGTARITETIFENRFMHVQELNRLGANITAEGNTAVVTGVPRLSGASVMATDLRASASLVIAGLVADGETVIDRIYHLDRGYDRMENKLSAVGAKILRIS.

22–23 contacts phosphoenolpyruvate; that stretch reads KN. Arg-92 contacts UDP-N-acetyl-alpha-D-glucosamine. The active-site Proton donor is the Cys-116. Cys-116 carries the post-translational modification 2-(S-cysteinyl)pyruvic acid O-phosphothioketal. Residues 121-125, Asp-304, and Ile-326 each bind UDP-N-acetyl-alpha-D-glucosamine; that span reads RPVDQ.

It belongs to the EPSP synthase family. MurA subfamily.

The protein resides in the cytoplasm. It catalyses the reaction phosphoenolpyruvate + UDP-N-acetyl-alpha-D-glucosamine = UDP-N-acetyl-3-O-(1-carboxyvinyl)-alpha-D-glucosamine + phosphate. It functions in the pathway cell wall biogenesis; peptidoglycan biosynthesis. Cell wall formation. Adds enolpyruvyl to UDP-N-acetylglucosamine. This is UDP-N-acetylglucosamine 1-carboxyvinyltransferase from Cupriavidus metallidurans (strain ATCC 43123 / DSM 2839 / NBRC 102507 / CH34) (Ralstonia metallidurans).